We begin with the raw amino-acid sequence, 198 residues long: Peptide deformylase (198 aa).

Fe cation-binding residues include cysteine 123 and histidine 170. Glutamate 171 is a catalytic residue. Fe cation is bound at residue histidine 174.

The protein belongs to the polypeptide deformylase family. Requires Fe(2+) as cofactor.

It catalyses the reaction N-terminal N-formyl-L-methionyl-[peptide] + H2O = N-terminal L-methionyl-[peptide] + formate. In terms of biological role, removes the formyl group from the N-terminal Met of newly synthesized proteins. Requires at least a dipeptide for an efficient rate of reaction. N-terminal L-methionine is a prerequisite for activity but the enzyme has broad specificity at other positions. This chain is Peptide deformylase, found in Mycoplasmopsis pulmonis (strain UAB CTIP) (Mycoplasma pulmonis).